The following is a 142-amino-acid chain: Large ribosomal subunit protein uL11 (142 aa).

It belongs to the universal ribosomal protein uL11 family. As to quaternary structure, part of the ribosomal stalk of the 50S ribosomal subunit. Interacts with L10 and the large rRNA to form the base of the stalk. L10 forms an elongated spine to which L12 dimers bind in a sequential fashion forming a multimeric L10(L12)X complex. In terms of processing, one or more lysine residues are methylated.

Functionally, forms part of the ribosomal stalk which helps the ribosome interact with GTP-bound translation factors. The polypeptide is Large ribosomal subunit protein uL11 (Vesicomyosocius okutanii subsp. Calyptogena okutanii (strain HA)).